The following is a 197-amino-acid chain: Probable NADPH:quinone oxidoreductase 1 (197 aa).

It belongs to the SsuE family. In terms of assembly, homotetramer. The cofactor is FMN.

The enzyme catalyses a quinone + NADH + H(+) = a quinol + NAD(+). It catalyses the reaction a quinone + NADPH + H(+) = a quinol + NADP(+). Functionally, the enzyme apparently serves as a quinone reductase in connection with conjugation reactions of hydroquinones involved in detoxification pathways. The chain is Probable NADPH:quinone oxidoreductase 1 from Oryza sativa subsp. japonica (Rice).